The following is a 608-amino-acid chain: Probable adenylate kinase 5, chloroplastic (608 aa).

A compositionally biased stretch (low complexity) spans 1–20; the sequence is MAASSSSSSPAAASAPFAAP. The tract at residues 1–44 is disordered; the sequence is MAASSSSSSPAAASAPFAAPGPHRRPGLALRPSPPTPPSSSLSC. A chloroplast-targeting transit peptide spans 1-75; sequence MAASSSSSSP…GPRGMGLRCR (75 aa). 99–104 contributes to the ATP binding site; sequence ASGKGT. The tract at residues 119-148 is NMP; the sequence is STGDLLRAEVSSGTEIGKKAKEYMDNGMLV. AMP is bound by residues Thr-120, Arg-125, 146–148, 175–178, and Gln-182; these read MLV and GYPR. Residues Arg-209, Arg-213, and 222-223 each bind ATP; that span reads IY. The LID stretch occupies residues 212 to 245; sequence GRRLDPETGKIYHIKNFPPENDEVSARLVTRSDD. The AMP site is built by Arg-242 and Arg-253.

The protein belongs to the adenylate kinase family.

It is found in the plastid. The protein localises to the chloroplast. It carries out the reaction AMP + ATP = 2 ADP. Its function is as follows. Catalyzes the reversible transfer of the terminal phosphate group between ATP and AMP. Plays an important role in cellular energy homeostasis and in adenine nucleotide metabolism. The sequence is that of Probable adenylate kinase 5, chloroplastic from Oryza sativa subsp. japonica (Rice).